The chain runs to 789 residues: Aconitate hydratase, mitochondrial (789 aa).

The transit peptide at 1 to 32 (MFCKISRAPARMGSRIFTQSTLRSFSCAPVAA) directs the protein to the mitochondrion. Residues Gln106 and 199–201 (DSH) contribute to the substrate site. The [4Fe-4S] cluster site is built by Cys392, Cys455, and Cys458. Residues Arg481, Arg486, Arg613, and 676–677 (SR) contribute to the substrate site.

This sequence belongs to the aconitase/IPM isomerase family. Monomer. [4Fe-4S] cluster serves as cofactor.

Its subcellular location is the mitochondrion. It carries out the reaction citrate = D-threo-isocitrate. Its pathway is carbohydrate metabolism; tricarboxylic acid cycle; isocitrate from oxaloacetate: step 2/2. Functionally, catalyzes the isomerization of citrate to isocitrate via cis-aconitate, a step in the citric acid cycle. This chain is Aconitate hydratase, mitochondrial, found in Schizosaccharomyces pombe (strain 972 / ATCC 24843) (Fission yeast).